We begin with the raw amino-acid sequence, 697 residues long: uncharacterized protein (697 aa).

The segment at residues 24-51 (CIRCRQKKIKCSGEKPSCQACSNNKVEC) is a DNA-binding region (zn(2)-C6 fungal-type). Residues 500 to 520 (YIMSPFVGFSILTAATIHMLL) traverse the membrane as a helical segment.

It is found in the nucleus membrane. This is an uncharacterized protein from Schizosaccharomyces pombe (strain 972 / ATCC 24843) (Fission yeast).